The chain runs to 555 residues: Synaptotagmin-14 (555 aa).

At 1 to 24 the chain is on the extracellular side; it reads MAIEGGERTCGVHELICIRKVSPE. Residues 25–47 form a helical; Signal-anchor for type III membrane protein membrane-spanning segment; the sequence is AVGFLSAVGVFIVLMLLLFLYIN. Residues 48 to 555 are Cytoplasmic-facing; the sequence is KKFCFENVGG…VCRWHALLES (508 aa). Disordered stretches follow at residues 76 to 97, 157 to 179, and 205 to 258; these read YNSY…EALG, TPPL…HLSC, and CPSE…PEPE. The segment covering 211–224 has biased composition (basic and acidic residues); that stretch reads TGHEAESYHNKGYE. 2 consecutive C2 domains span residues 260-379 and 415-550; these read KYGT…SLPV and SVPE…CRWH.

The protein belongs to the synaptotagmin family. Homodimer. Can also form heterodimers. In terms of tissue distribution, expressed in heart and testis. Expressed in brain (especially in the cerebellum).

It localises to the membrane. May be involved in the trafficking and exocytosis of secretory vesicles in non-neuronal tissues. Is Ca(2+)-independent. The sequence is that of Synaptotagmin-14 (Syt14) from Mus musculus (Mouse).